Here is a 509-residue protein sequence, read N- to C-terminus: Probable triacylglyceride transporter ML0556 (509 aa).

13 helical membrane-spanning segments follow: residues 48–68 (RITWIVTMYLLGYIAAMPLLS), 78–98 (LLLQVSLAGFAIGSVMTALAG), 112–132 (IQGVASGALLPITLALGADLW), 146–166 (AAQELGSVLGPLYGIFIVWLF), 171–191 (YVFWINIPLTAIAMLMIQVSL), 203–223 (VDVVGGVLLAIALGLVVIGLY), 232–252 (VLPSYGVPVLVGGIVATVAFA), 272–292 (PFLSALGASVAAGAALMVTLV), 309–329 (AAGLLVWFLIALPIGAVLGGW), 339–359 (MTFVGLLITAGGYWLISHWPV), 381–403 (LLVAGLGLGLVIGPLSSATLRVV), 410–430 (IASAAVVVARMTGMLIGVAAL), and 477–497 (IFMITAIVCVIGALLGLLISS).

The protein belongs to the major facilitator superfamily.

It is found in the cell inner membrane. In association with lipoprotein LprG probably transports triacylglycerides (TAG) across the inner cell membrane into the periplasm; TAG probably regulates lipid metabolism and growth regulation. May be an efflux transporter and involved in maintaining correct cell wall permeability. Probably required with LprG for normal surface localization of lipoarabinomannan (LAM). The chain is Probable triacylglyceride transporter ML0556 from Mycobacterium leprae (strain TN).